Consider the following 422-residue polypeptide: Putative polyketide beta-ketoacyl synthase 1 (422 aa).

Residues 2–416 (TRRVAVTGIG…GFQSAVLLTG (415 aa)) enclose the Ketosynthase family 3 (KS3) domain. Catalysis depends on for beta-ketoacyl synthase activity residues cysteine 169, histidine 309, and histidine 346.

The protein belongs to the thiolase-like superfamily. Beta-ketoacyl-ACP synthases family.

It functions in the pathway antibiotic biosynthesis; curamycin biosynthesis. This chain is Putative polyketide beta-ketoacyl synthase 1 (curA), found in Streptomyces cyaneus (Streptomyces curacoi).